Consider the following 542-residue polypeptide: Hydroxylamine reductase (542 aa).

[4Fe-4S] cluster-binding residues include Cys3, Cys6, Cys15, and Cys21. The hybrid [4Fe-2O-2S] cluster site is built by His238, Glu262, Cys307, Cys398, Cys426, Cys451, Glu485, and Lys487. Cys398 carries the cysteine persulfide modification.

This sequence belongs to the HCP family. The cofactor is [4Fe-4S] cluster. Hybrid [4Fe-2O-2S] cluster serves as cofactor.

The protein localises to the cytoplasm. It catalyses the reaction A + NH4(+) + H2O = hydroxylamine + AH2 + H(+). Catalyzes the reduction of hydroxylamine to form NH(3) and H(2)O. This is Hydroxylamine reductase from Microcystis aeruginosa (strain NIES-843 / IAM M-2473).